Consider the following 143-residue polypeptide: Hemoglobin subunit alpha-1 (143 aa).

The residue at position 2 (S2) is an N-acetylserine. Residues 2–143 enclose the Globin domain; that stretch reads SLSSKDKATV…LALALAEKYR (142 aa). H60 provides a ligand contact to O2. Residue H89 participates in heme b binding.

Belongs to the globin family. In terms of assembly, hb 1 is a heterotetramer of two alpha-1 and two beta-1 chains. As to expression, red blood cells.

Functionally, involved in oxygen transport from gills to the various peripheral tissues. In Arctogadus glacialis (Arctic cod), this protein is Hemoglobin subunit alpha-1 (hba1).